The following is a 208-amino-acid chain: uncharacterized protein (208 aa).

The interval 124–208 (KKTGSSNART…PSFGKYSSLA (85 aa)) is disordered. Over residues 133 to 170 (TPDEGKKAKNAPEEEKVKTSGSEDAKGEESAVEGKEPE) the composition is skewed to basic and acidic residues.

It is found in the golgi apparatus. This is an uncharacterized protein from Encephalitozoon cuniculi (strain GB-M1) (Microsporidian parasite).